Reading from the N-terminus, the 268-residue chain is Xyloglucan endotransglucosylase protein 7 (268 aa).

The region spanning 1–196 (MNAEGGNLHR…WTKAPFTASY (196 aa)) is the GH16 domain. The active-site Nucleophile is the E82. E86 acts as the Proton donor in catalysis. Position 86 (E86) interacts with xyloglucan. N-linked (GlcNAc...) asparagine glycosylation occurs at N90. Xyloglucan is bound by residues 99 to 101 (HTN), 109 to 111 (NRE), 175 to 176 (DW), and G180. Intrachain disulfides connect C204–C213 and C251–C265. R256 serves as a coordination point for xyloglucan.

Belongs to the glycosyl hydrolase 16 family. XTH group 2 subfamily. In terms of processing, contains at least one intrachain disulfide bond essential for its enzymatic activity. In terms of tissue distribution, expressed at a very high level in flowers and stems (picked at anthesis), and at a lower level in ripe leaves and fruits.

Its subcellular location is the cytoplasm. It carries out the reaction breaks a beta-(1-&gt;4) bond in the backbone of a xyloglucan and transfers the xyloglucanyl segment on to O-4 of the non-reducing terminal glucose residue of an acceptor, which can be a xyloglucan or an oligosaccharide of xyloglucan.. Its function is as follows. Catalyzes xyloglucan endotransglycosylation (XET). Cleaves and religates xyloglucan polymers. Does not catalyze xyloglucan endohydrolysis (XEH). Probably involved in cell wall assembly and synthesis in fast growing tissues and in the maintenance of firmness in mature fruits. The chain is Xyloglucan endotransglucosylase protein 7 from Diospyros kaki (Kaki persimmon).